A 256-amino-acid polypeptide reads, in one-letter code: (R)-S-adenosyl-L-methionine hydrolase (256 aa).

Adenosine contacts are provided by Asp-7, His-41, Asp-68, and Asn-183. Residues Asn-183, Tyr-212, Ser-226, Glu-231, Val-234, and Met-236 each contribute to the (R)-S-adenosyl-L-methionine site. Val-234 serves as a coordination point for adenosine.

Belongs to the SAM hydrolase / SAM-dependent halogenase family. In terms of assembly, homotrimer.

It carries out the reaction (R)-S-adenosyl-L-methionine + H2O = adenosine + L-methionine + H(+). Its function is as follows. Catalyzes the hydrolysis of S-adenosyl-L-methionine (SAM) into adenosine and L-methionine. Is likely stereoselective, specifically hydrolyzing (R)-S-adenosyl-L-methionine ((R)-SAM), the inactive form of the ubiquitous cofactor SAM, and not the active form of SAM, (S)-S-adenosyl-L-methionine. Probaly plays a role in preventing accumulation of (R)-S-adenosyl-L-methionine in cells; maintenance of (S)-S-denosyl-L-methionine homochirality is important for cellular health given that the (R)-form is largely inactive as a methyl donor and can function as an inhibitor of methyltransferases. Is unable to mediate a fluorination or chlorination reaction with SAM. In Pyrococcus horikoshii (strain ATCC 700860 / DSM 12428 / JCM 9974 / NBRC 100139 / OT-3), this protein is (R)-S-adenosyl-L-methionine hydrolase.